Reading from the N-terminus, the 225-residue chain is Heptaprenylglyceryl phosphate synthase (225 aa).

K6 provides a ligand contact to sn-glycerol 1-phosphate. The Mg(2+) site is built by D8 and T34. Sn-glycerol 1-phosphate is bound by residues 153–158, G183, and 203–204; these read YIEYSG and GN.

It belongs to the GGGP/HepGP synthase family. Group I subfamily. As to quaternary structure, homodimer. The cofactor is Mg(2+).

The catalysed reaction is sn-glycerol 1-phosphate + all-trans-heptaprenyl diphosphate = 3-heptaprenyl-sn-glycero-1-phosphate + diphosphate. The protein operates within membrane lipid metabolism; glycerophospholipid metabolism. Functionally, prenyltransferase that catalyzes in vivo the transfer of the heptaprenyl moiety of heptaprenyl pyrophosphate (HepPP; 35 carbon atoms) to the C3 hydroxyl of sn-glycerol-1-phosphate (G1P), producing heptaprenylglyceryl phosphate (HepGP). This reaction is an ether-bond-formation step in the biosynthesis of archaea-type G1P-based membrane lipids found in Bacillales. The sequence is that of Heptaprenylglyceryl phosphate synthase from Listeria welshimeri serovar 6b (strain ATCC 35897 / DSM 20650 / CCUG 15529 / CIP 8149 / NCTC 11857 / SLCC 5334 / V8).